We begin with the raw amino-acid sequence, 382 residues long: Exostosin-1 homolog (382 aa).

Positions 1–20 are cleaved as a signal peptide; that stretch reads MQNVMKFHLVIFMLFGSVRL. N268 is a glycosylation site (N-linked (GlcNAc...) asparagine).

The protein belongs to the glycosyltransferase 47 family. In terms of assembly, interacts with rib-2.

The protein resides in the endoplasmic reticulum. It localises to the golgi apparatus. Functionally, required for the biosynthesis of heparan sulfate by positively regulating N-acetylglucosamine transferase II (GlcNAcT-II) and glucuronyl transferase II (GlcAT-II) activities of glycosyltransferase rib-2. Probably not directly involved in chondroitin sulfate biosynthesis but negatively regulates chondroitin sulfate levels. Maternally required for normal ventral epidermal enclosure and for embryo elongation during the early stages of embryonic development. In addition, involved in the elongation of the pharyngeal isthmus and in the organization of the actin cytoskeleton in the pharyngeal muscles during the later stages embryonic development. In adults, regulates egg-laying and the normal morphogenesis of the vulva. Also involved in the directed migration of hermaphrodite-specific neurons. This chain is Exostosin-1 homolog (rib-1), found in Caenorhabditis elegans.